The primary structure comprises 55 residues: Large ribosomal subunit protein bL32c (55 aa).

Residues 1–24 (MAVPKKRTSKSKKNARKANWKRKG) form a disordered region.

The protein belongs to the bacterial ribosomal protein bL32 family.

It localises to the plastid. It is found in the chloroplast. This chain is Large ribosomal subunit protein bL32c, found in Phaeodactylum tricornutum (strain CCAP 1055/1).